Here is a 218-residue protein sequence, read N- to C-terminus: ATP-dependent dethiobiotin synthetase BioD (218 aa).

10 to 15 serves as a coordination point for ATP; the sequence is NAGKTT. A Mg(2+)-binding site is contributed by T14. K35 is an active-site residue. T39 is a binding site for substrate. Residues H52 and E116 each contribute to the Mg(2+) site. Residues 116–119 and 176–177 contribute to the ATP site; these read EGAG and LR.

The protein belongs to the dethiobiotin synthetase family. In terms of assembly, homodimer. The cofactor is Mg(2+).

It is found in the cytoplasm. The catalysed reaction is (7R,8S)-7,8-diammoniononanoate + CO2 + ATP = (4R,5S)-dethiobiotin + ADP + phosphate + 3 H(+). It participates in cofactor biosynthesis; biotin biosynthesis; biotin from 7,8-diaminononanoate: step 1/2. Its function is as follows. Catalyzes a mechanistically unusual reaction, the ATP-dependent insertion of CO2 between the N7 and N8 nitrogen atoms of 7,8-diaminopelargonic acid (DAPA, also called 7,8-diammoniononanoate) to form a ureido ring. The sequence is that of ATP-dependent dethiobiotin synthetase BioD from Helicobacter pylori (strain Shi470).